The primary structure comprises 156 residues: Small ribosomal subunit protein uS7 (156 aa).

The protein belongs to the universal ribosomal protein uS7 family. Part of the 30S ribosomal subunit. Contacts proteins S9 and S11.

Functionally, one of the primary rRNA binding proteins, it binds directly to 16S rRNA where it nucleates assembly of the head domain of the 30S subunit. Is located at the subunit interface close to the decoding center, probably blocks exit of the E-site tRNA. The chain is Small ribosomal subunit protein uS7 from Anaeromyxobacter dehalogenans (strain 2CP-C).